We begin with the raw amino-acid sequence, 120 residues long: NAD(P)H-quinone oxidoreductase subunit 3, chloroplastic (120 aa).

Helical transmembrane passes span 10 to 30, 64 to 84, and 89 to 109; these read FWAFLLIASLVPVLAVGTSSL, MFALVFVVFDVETVFLYPWAM, and LGVLAFIEALVFVLVLIIGLV.

The protein belongs to the complex I subunit 3 family. NDH is composed of at least 16 different subunits, 5 of which are encoded in the nucleus.

Its subcellular location is the plastid. It is found in the chloroplast thylakoid membrane. It carries out the reaction a plastoquinone + NADH + (n+1) H(+)(in) = a plastoquinol + NAD(+) + n H(+)(out). It catalyses the reaction a plastoquinone + NADPH + (n+1) H(+)(in) = a plastoquinol + NADP(+) + n H(+)(out). Its function is as follows. NDH shuttles electrons from NAD(P)H:plastoquinone, via FMN and iron-sulfur (Fe-S) centers, to quinones in the photosynthetic chain and possibly in a chloroplast respiratory chain. The immediate electron acceptor for the enzyme in this species is believed to be plastoquinone. Couples the redox reaction to proton translocation, and thus conserves the redox energy in a proton gradient. In Zygnema circumcarinatum (Green alga), this protein is NAD(P)H-quinone oxidoreductase subunit 3, chloroplastic.